The chain runs to 106 residues: Large ribosomal subunit protein uL24 (106 aa).

The protein belongs to the universal ribosomal protein uL24 family. Part of the 50S ribosomal subunit.

In terms of biological role, one of two assembly initiator proteins, it binds directly to the 5'-end of the 23S rRNA, where it nucleates assembly of the 50S subunit. Functionally, one of the proteins that surrounds the polypeptide exit tunnel on the outside of the subunit. The polypeptide is Large ribosomal subunit protein uL24 (Alkalilimnicola ehrlichii (strain ATCC BAA-1101 / DSM 17681 / MLHE-1)).